Here is a 255-residue protein sequence, read N- to C-terminus: Ditrans,polycis-undecaprenyl-diphosphate synthase ((2E,6E)-farnesyl-diphosphate specific) (255 aa).

Aspartate 21 is a catalytic residue. Aspartate 21 lines the Mg(2+) pocket. Residues 22-25 (GNGR), tryptophan 26, arginine 34, histidine 38, and 66-68 (SSE) contribute to the substrate site. The Proton acceptor role is filled by asparagine 69. Substrate-binding positions include tryptophan 70, arginine 72, arginine 189, and 195 to 197 (RIS). Position 208 (glutamate 208) interacts with Mg(2+).

The protein belongs to the UPP synthase family. Homodimer. Mg(2+) serves as cofactor.

It carries out the reaction 8 isopentenyl diphosphate + (2E,6E)-farnesyl diphosphate = di-trans,octa-cis-undecaprenyl diphosphate + 8 diphosphate. Functionally, catalyzes the sequential condensation of isopentenyl diphosphate (IPP) with (2E,6E)-farnesyl diphosphate (E,E-FPP) to yield (2Z,6Z,10Z,14Z,18Z,22Z,26Z,30Z,34E,38E)-undecaprenyl diphosphate (di-trans,octa-cis-UPP). UPP is the precursor of glycosyl carrier lipid in the biosynthesis of bacterial cell wall polysaccharide components such as peptidoglycan and lipopolysaccharide. The protein is Ditrans,polycis-undecaprenyl-diphosphate synthase ((2E,6E)-farnesyl-diphosphate specific) of Xylella fastidiosa (strain 9a5c).